The following is a 278-amino-acid chain: Purine nucleoside phosphorylase YlmD (278 aa).

The Zn(2+) site is built by His-87, Cys-132, and His-149.

Belongs to the purine nucleoside phosphorylase YfiH/LACC1 family. Homodimer. Cu(2+) serves as cofactor. The cofactor is Zn(2+).

It carries out the reaction adenosine + phosphate = alpha-D-ribose 1-phosphate + adenine. The enzyme catalyses S-methyl-5'-thioadenosine + phosphate = 5-(methylsulfanyl)-alpha-D-ribose 1-phosphate + adenine. It catalyses the reaction inosine + phosphate = alpha-D-ribose 1-phosphate + hypoxanthine. The catalysed reaction is adenosine + H2O + H(+) = inosine + NH4(+). Functionally, purine nucleoside enzyme that catalyzes the phosphorolysis of adenosine and inosine nucleosides, yielding D-ribose 1-phosphate and the respective free bases, adenine and hypoxanthine. Also catalyzes the phosphorolysis of S-methyl-5'-thioadenosine into adenine and S-methyl-5-thio-alpha-D-ribose 1-phosphate. Also has adenosine deaminase activity. The polypeptide is Purine nucleoside phosphorylase YlmD (ylmD) (Bacillus subtilis (strain 168)).